Reading from the N-terminus, the 754-residue chain is Polycomb protein mes-3 (754 aa).

The segment at 1 to 83 (MTPATAEVKV…PTKLENIQKT (83 aa)) is disordered. Residues 31-40 (ARREEEKENL) are compositionally biased toward basic and acidic residues. The span at 51-61 (SSEAGSSRESS) shows a compositional bias: low complexity.

In terms of assembly, forms a heterotrimeric complex with the Polycomb proteins mes-2 and mes-3. Does not interact with mes-4. Interacts with nyfa-1. In adults, it is predominantly expressed in the germline, and weakly expressed in intestinal cells.

Its subcellular location is the nucleus. In terms of biological role, component of a Polycomb group (PcG) complex. PcG proteins act by forming multiprotein complexes, which are required to maintain the transcriptionally repressive state of homeotic genes throughout development. In association with the nfya-1-NF-Y complex, may play a role in repressing the expression of the homeobox protein egl-5 in tissues such as the head. PcG proteins are not required to initiate repression, but to maintain it during later stages of development. The mes-2/mes-3/mes-6 complex may participate in the global inactivation of the X chromosomes in germline cells. The complex may act via methylation of histone H3 'Lys-27', rendering chromatin heritably changed in its expressibility. This complex is required to exclude mes-4 from the inactivated X-chromosomes in germline cells. The chain is Polycomb protein mes-3 from Caenorhabditis elegans.